The following is a 332-amino-acid chain: dTDP-3,4-didehydro-2,6-dideoxy-alpha-D-glucose 3-reductase (332 aa).

17-23 contributes to the NADP(+) binding site; the sequence is CADIAWR. Arg24 serves as a coordination point for substrate. Residues 42–43, Tyr63, Leu79, and His84 contribute to the NADP(+) site; that span reads SR. The Proton donor role is filled by Lys102. 2 residues coordinate NADP(+): Arg170 and Asp182. Positions 240 and 260 each coordinate substrate.

This sequence belongs to the Gfo/Idh/MocA family. Homotetramer; dimer of dimers.

It carries out the reaction dTDP-4-dehydro-2,6-dideoxy-alpha-D-glucose + NADP(+) = dTDP-3,4-didehydro-2,6-dideoxy-alpha-D-glucose + NADPH + H(+). Its pathway is antibiotic biosynthesis. Involved in the biosynthesis of L-digitoxose, an unusual dideoxysugar attached to various pharmacologically active natural products, including the antitumor antibiotic tetrocarcin A, and the antibiotics kijanimicin and jadomycin B. Catalyzes the reduction of the C-3 keto moiety of dTDP-3,4-diketo-2,6-dideoxy-alpha-D-glucose to yield dTDP-4-keto-2,6-dideoxy-alpha-D-glucose. Also able to reduce dTDP-3-keto-6-deoxy-D-galactose and dTDP-3-keto-6-deoxy-D-glucose to yield dTDP-fucose and dTDP-quinovose, respectively. This Actinomadura kijaniata protein is dTDP-3,4-didehydro-2,6-dideoxy-alpha-D-glucose 3-reductase.